The chain runs to 525 residues: Glutamyl-tRNA(Gln) amidotransferase subunit A, mitochondrial (525 aa).

Catalysis depends on charge relay system residues K76 and S168. The Acyl-ester intermediate role is filled by S192.

It belongs to the amidase family. GatA subfamily. In terms of assembly, subunit of the heterotrimeric GatCAB amidotransferase (AdT) complex, composed of A (QRSL1), B (GATB) and C (GATC) subunits.

Its subcellular location is the mitochondrion. The enzyme catalyses L-glutamyl-tRNA(Gln) + L-glutamine + ATP + H2O = L-glutaminyl-tRNA(Gln) + L-glutamate + ADP + phosphate + H(+). In terms of biological role, allows the formation of correctly charged Gln-tRNA(Gln) through the transamidation of misacylated Glu-tRNA(Gln) in the mitochondria. The reaction takes place in the presence of glutamine and ATP through an activated gamma-phospho-Glu-tRNA(Gln). The protein is Glutamyl-tRNA(Gln) amidotransferase subunit A, mitochondrial (Qrsl1) of Rattus norvegicus (Rat).